A 240-amino-acid polypeptide reads, in one-letter code: Small ribosomal subunit protein uS3 (240 aa).

The 69-residue stretch at 39 to 107 (IREFIKEECK…ELHLNIVEVR (69 aa)) folds into the KH type-2 domain. Positions 212 to 222 (PQARDRRHAEL) are enriched in basic and acidic residues. The tract at residues 212-240 (PQARDRRHAELQEGGGPRPQGGGRPRRDR) is disordered. Over residues 224-234 (EGGGPRPQGGG) the composition is skewed to gly residues.

The protein belongs to the universal ribosomal protein uS3 family. In terms of assembly, part of the 30S ribosomal subunit. Forms a tight complex with proteins S10 and S14.

In terms of biological role, binds the lower part of the 30S subunit head. Binds mRNA in the 70S ribosome, positioning it for translation. The polypeptide is Small ribosomal subunit protein uS3 (Dinoroseobacter shibae (strain DSM 16493 / NCIMB 14021 / DFL 12)).